Reading from the N-terminus, the 313-residue chain is MLARNNSLVTEFILAGLTDHPEFRQPLFFLFLVIYIVTMVGNLGLITLFGLNSHLHTPMYYFLFNLSFIDLCYSSVFTPKMLMNFVSKKNIISNVGCMTRLFFFLFFVISECYMLTSMAYDRYVAICNPLLYKVTMSHQVCSMLTFAAYIMGLAGATAHTGCMLRLTFCSANIINHYLCDILPLLQLSCTSTYVNEVVVLIVVGTNITVPSCTILISYVFIVTSILHIKSTQGRSKAFSTCSSHVIALSLFFGSAAFMYIKYSSGSMEQGKVSSVFYTNVVPMLNPLIYSLRNKDVKVALRKALIKIQRRNIF.

Residues 1–25 (MLARNNSLVTEFILAGLTDHPEFRQ) are Extracellular-facing. The N-linked (GlcNAc...) asparagine glycan is linked to N5. A helical membrane pass occupies residues 26 to 46 (PLFFLFLVIYIVTMVGNLGLI). The Cytoplasmic portion of the chain corresponds to 47–54 (TLFGLNSH). Residues 55–75 (LHTPMYYFLFNLSFIDLCYSS) form a helical membrane-spanning segment. Over 76–99 (VFTPKMLMNFVSKKNIISNVGCMT) the chain is Extracellular. A disulfide bridge links C97 with C189. The helical transmembrane segment at 100–120 (RLFFFLFFVISECYMLTSMAY) threads the bilayer. Topologically, residues 121–139 (DRYVAICNPLLYKVTMSHQ) are cytoplasmic. Residues 140–160 (VCSMLTFAAYIMGLAGATAHT) form a helical membrane-spanning segment. The Extracellular segment spans residues 161–197 (GCMLRLTFCSANIINHYLCDILPLLQLSCTSTYVNEV). A helical membrane pass occupies residues 198–217 (VVLIVVGTNITVPSCTILIS). Over 218–237 (YVFIVTSILHIKSTQGRSKA) the chain is Cytoplasmic. The helical transmembrane segment at 238 to 258 (FSTCSSHVIALSLFFGSAAFM) threads the bilayer. The Extracellular portion of the chain corresponds to 259-270 (YIKYSSGSMEQG). Residues 271–291 (KVSSVFYTNVVPMLNPLIYSL) form a helical membrane-spanning segment. At 292 to 313 (RNKDVKVALRKALIKIQRRNIF) the chain is on the cytoplasmic side.

The protein belongs to the G-protein coupled receptor 1 family.

It is found in the cell membrane. Odorant receptor. The protein is Olfactory receptor 8B2 (OR8B2) of Homo sapiens (Human).